The sequence spans 252 residues: Trans-aconitate 2-methyltransferase (252 aa).

This sequence belongs to the methyltransferase superfamily. Tam family.

Its subcellular location is the cytoplasm. It catalyses the reaction trans-aconitate + S-adenosyl-L-methionine = (E)-3-(methoxycarbonyl)pent-2-enedioate + S-adenosyl-L-homocysteine. Its function is as follows. Catalyzes the S-adenosylmethionine monomethyl esterification of trans-aconitate. This chain is Trans-aconitate 2-methyltransferase, found in Escherichia coli O6:K15:H31 (strain 536 / UPEC).